Reading from the N-terminus, the 921-residue chain is Inner nuclear membrane protein Man1 (921 aa).

An LEM domain is found at 7 to 51; sequence AAAPQQLSDEELFSQLRRYGLSPGPVTESTRPVYLKKLKKLREEE. Ser-28 carries the post-translational modification Phosphoserine. Disordered stretches follow at residues 47–97, 136–357, and 374–395; these read LREE…AYLR, SSDE…GGCG, and LAPLLSPPSPDGDSTLESPTGP. Composition is skewed to low complexity over residues 53 to 62 and 72 to 85; these read QQQQQQQQQQ and TRNSNNNNTATAMG. Ser-136, Ser-137, and Ser-140 each carry phosphoserine. A compositionally biased stretch (acidic residues) spans 217–237; the sequence is AAEDADEELADGEDRDPEAEE. Residues Ser-261, Ser-263, and Ser-287 each carry the phosphoserine modification. Over residues 263-275 the composition is skewed to acidic residues; the sequence is SEEEEEEGEEDGD. The span at 308-317 shows a compositional bias: polar residues; the sequence is SGGSRQETSV. Gly residues predominate over residues 348-357; that stretch reads PGGGGGGGCG. Position 412 is a phosphoserine (Ser-412). A run of 2 helical transmembrane segments spans residues 486 to 506 and 637 to 657; these read MFLLTAACLFFLILGLTYLGM and AFITVTHRLLLLCLGVVLVCV. An interaction with SMAD1, SMAD2, SMAD3 and SMAD5 region spans residues 709–921; the sequence is VRDSLIQPQD…TGLANSQGSS (213 aa). A DNA-binding region spans residues 717-736; it reads QDRKKMKKVWDRAVDFLAAN. Ser-787 bears the Phosphoserine mark. Residue Thr-893 is modified to Phosphothreonine. Ser-921 is subject to Phosphoserine.

In terms of assembly, interacts with SMAD1, SMAD2, SMAD3 and SMAD5. Binds to both phosphorylated and unphosphorylated R-SMADS.

The protein localises to the nucleus inner membrane. In terms of biological role, can function as a specific repressor of TGF-beta, activin, and BMP signaling through its interaction with the R-SMAD proteins. Antagonizes TGF-beta-induced cell proliferation arrest. The protein is Inner nuclear membrane protein Man1 (Lemd3) of Mus musculus (Mouse).